Here is a 221-residue protein sequence, read N- to C-terminus: Small ribosomal subunit protein uS3c (221 aa).

The KH type-2 domain occupies 43–121 (IQNYIQKNMR…KLKIAITKIA (79 aa)).

Belongs to the universal ribosomal protein uS3 family. In terms of assembly, part of the 30S ribosomal subunit.

The protein resides in the plastid. The protein localises to the chloroplast. The sequence is that of Small ribosomal subunit protein uS3c (rps3) from Jasminum nudiflorum (Winter jasmine).